The chain runs to 302 residues: Glutaminase (302 aa).

Residues Ser61, Asn111, Glu155, Asn162, Tyr186, Tyr238, and Val256 each contribute to the substrate site.

Belongs to the glutaminase family. Homotetramer.

It catalyses the reaction L-glutamine + H2O = L-glutamate + NH4(+). This is Glutaminase from Pseudomonas aeruginosa (strain ATCC 15692 / DSM 22644 / CIP 104116 / JCM 14847 / LMG 12228 / 1C / PRS 101 / PAO1).